Here is a 126-residue protein sequence, read N- to C-terminus: C-type natriuretic peptide 1 (126 aa).

The signal sequence occupies residues 1 to 22; it reads MLCPALLCAALLLLTPVEITDA. A propeptide spanning residues 23–104 is cleaved from the precursor; the sequence is RALQQPSDAA…KRAEPDRSRR (82 aa). Cysteine 110 and cysteine 126 form a disulfide bridge.

It belongs to the natriuretic peptide family.

The protein localises to the secreted. In terms of biological role, exhibits natriuretic and vasodepressant activity. Has cGMP-stimulating activity. May help to regulate body fluid homeostasis in a variety of aquatic environments. The protein is C-type natriuretic peptide 1 of Takifugu rubripes (Japanese pufferfish).